We begin with the raw amino-acid sequence, 125 residues long: Steroid Delta-isomerase (125 aa).

The active-site Proton donor is Tyr14. Catalysis depends on Asp38, which acts as the Proton acceptor. Asp99 lines the substrate pocket.

As to quaternary structure, homodimer.

The catalysed reaction is a 3-oxo-Delta(5)-steroid = a 3-oxo-Delta(4)-steroid. This Comamonas testosteroni (Pseudomonas testosteroni) protein is Steroid Delta-isomerase (ksi).